Here is a 174-residue protein sequence, read N- to C-terminus: Adenine phosphoribosyltransferase (174 aa).

The protein belongs to the purine/pyrimidine phosphoribosyltransferase family. As to quaternary structure, homodimer.

It localises to the cytoplasm. It carries out the reaction AMP + diphosphate = 5-phospho-alpha-D-ribose 1-diphosphate + adenine. Its pathway is purine metabolism; AMP biosynthesis via salvage pathway; AMP from adenine: step 1/1. In terms of biological role, catalyzes a salvage reaction resulting in the formation of AMP, that is energically less costly than de novo synthesis. In Nitrosomonas eutropha (strain DSM 101675 / C91 / Nm57), this protein is Adenine phosphoribosyltransferase.